The following is a 272-amino-acid chain: Rhamnulose-1-phosphate aldolase (272 aa).

E117 is a catalytic residue. Residues H141, H143, and H212 each coordinate Zn(2+).

This sequence belongs to the aldolase class II family. RhaD subfamily. The cofactor is Zn(2+).

The protein resides in the cytoplasm. It catalyses the reaction L-rhamnulose 1-phosphate = (S)-lactaldehyde + dihydroxyacetone phosphate. It participates in carbohydrate degradation; L-rhamnose degradation; glycerone phosphate from L-rhamnose: step 3/3. Functionally, catalyzes the reversible cleavage of L-rhamnulose-1-phosphate to dihydroxyacetone phosphate (DHAP) and L-lactaldehyde. This Mannheimia succiniciproducens (strain KCTC 0769BP / MBEL55E) protein is Rhamnulose-1-phosphate aldolase.